Reading from the N-terminus, the 470-residue chain is Cannabinoid receptor 1 (470 aa).

The Extracellular segment spans residues Met1 to Ala121. Positions Lys2–Leu23 are required for mitochondrial localization. Residues Asn78 and Asn84 are each glycosylated (N-linked (GlcNAc...) asparagine). The helical transmembrane segment at Leu122–Val142 threads the bilayer. The Cytoplasmic portion of the chain corresponds to Gln143 to His154. A helical membrane pass occupies residues Phe155–Val175. Over Asp176–Asn187 the chain is Extracellular. A helical transmembrane segment spans residues Val188–Phe208. At Leu209–Lys232 the chain is on the cytoplasmic side. The chain crosses the membrane as a helical span at residues Ala233–Phe253. Residues Gly254–Met277 are Extracellular-facing. The chain crosses the membrane as a helical span at residues Phe278–Leu298. At Trp299–Thr344 the chain is on the cytoplasmic side. Residues Leu345–Tyr365 form a helical membrane-spanning segment. Topologically, residues Asp366–Thr377 are extracellular. Asn372 carries an N-linked (GlcNAc...) asparagine glycan. Residues Val378–Ala398 traverse the membrane as a helical segment. The Cytoplasmic segment spans residues Leu399 to Val470. A lipid anchor (S-palmitoyl cysteine) is attached at Cys415.

Belongs to the G-protein coupled receptor 1 family. Post-translationally, palmitoylation at Cys-415 is important for recruitment at both plasma membrane and lipid rafts and association with G protein alpha subunits. As to expression, expressed in neurons, especially in the olfactory bulbs, telencephalic pallium, and hypothalamus and also in the midbrain and hindbrain (in the mesencephalic tegmentum and dorsolateral rhombencephalon). Expressed also in the spinal cord.

It localises to the cell membrane. The protein localises to the mitochondrion outer membrane. It is found in the cell projection. Its subcellular location is the axon. The protein resides in the presynapse. Functionally, G-protein coupled receptor for cannabinoids. Mediates many cannabinoid-induced effects in the central nervous system (CNS), as well as in peripheral tissues. Regulates cellular respiration and energy production in response to cannabinoids. Signaling typically involves reduction in cyclic AMP. This is Cannabinoid receptor 1 (cnr1) from Xenopus laevis (African clawed frog).